The chain runs to 1074 residues: Pleckstrin homology domain-containing family M member 1 (1074 aa).

An RUN domain is found at 40–182 (TSEDGDANTM…LSFELSYKSA (143 aa)). Disordered stretches follow at residues 214-244 (QRKE…RRNR), 272-336 (LQEN…MFQT), and 382-454 (DEKQ…PPQE). Ser-218 bears the Phosphoserine mark. Polar residues-rich tracts occupy residues 313–329 (SKAQ…NQEP) and 393–404 (PAQSTSDQQPSS). 3 positions are modified to phosphoserine: Ser-433, Ser-436, and Ser-491. Positions 506–526 (GNAQPAPAPAPAPAPAPAPAP) are disordered. The segment covering 511–525 (APAPAPAPAPAPAPA) has biased composition (pro residues). One can recognise a PH 1 domain in the interval 551–642 (GLMKLGTVAR…WLDRVREALQ (92 aa)). Positions 649 to 655 (EDEWVNI) match the LIR motif. Positions 661–680 (AEDAPEAPPDSLPPYSTLLP) are disordered. The interval 672–1074 (LPPYSTLLPE…RKYQEQNVVS (403 aa)) is interaction with RAB7A. The PH 2 domain maps to 701 to 795 (DAIKESLLYL…WRDLVRKVLA (95 aa)). A Phorbol-ester/DAG-type zinc finger spans residues 1004-1058 (QHVYHCDLCTQRGFICQICHHQDIIFPFEFDTTVRCAECRTVFHQSCQAVVRKGC).

Interacts (via N- and C-terminus) with RAB7A (GTP-bound form). Simultaneously interacts with RAB7A and ARL8B; bringing about clustering and fusion of late endosomes and lysosomes. Interacts (via RUN domain) with ARL8B (GTP-bound form); the interaction is required for PLEKHM1 localization to lysosomes and for ARL8B function in delivery and degradation of endocytic and autophagic cargo in lysosomes. PLEKHM1 and PLEKHM2 compete for interaction with ARL8B. Interacts with ARL8A; the interaction is weaker than with ARL8B. Interacts with VPS41, VPS11, VPS18, VPS33A and VPS39; indicative for an association with the HOPS complex; the interactions with, at least, VPS41, VPS11, VPS18 and VPS33A require ARL8B. Interacts with GABARAP, GABARAPL, GABARAPL2, MAP1LC3A, MAP1LC3B and MAP1LC3C. Interacts with PAFAH1B. Interacts (via N- and C-terminus) with NDEL1. Interacts (via C-terminus) with MAP3K7. Interacts (via N- and C-terminus) with FAM98A. Interacts (via C-terminus) with DEF8; this interaction is weak but increased in a RAB7A-dependent manner. May interact with sialyl-lex-positive protein.

It localises to the autolysosome membrane. It is found in the endosome membrane. The protein resides in the late endosome membrane. Its subcellular location is the lysosome membrane. In terms of biological role, acts as a multivalent adapter protein that regulates Rab7-dependent and HOPS complex-dependent fusion events in the endolysosomal system and couples autophagic and the endocytic trafficking pathways. Acts as a dual effector of RAB7A and ARL8B that simultaneously binds these GTPases, bringing about clustering and fusion of late endosomes and lysosomes. Required for late stages of endolysosomal maturation, facilitating both endocytosis-mediated degradation of growth factor receptors and autophagosome clearance. Interaction with Arl8b is a crucial factor in the terminal maturation of autophagosomes and to mediate autophagosome-lysosome fusion. Positively regulates lysosome peripheral distribution and ruffled border formation in osteoclasts. May be involved in negative regulation of endocytic transport from early endosome to late endosome/lysosome implicating its association with Rab7. May have a role in sialyl-lex-mediated transduction of apoptotic signals. Involved in bone resorption. The protein is Pleckstrin homology domain-containing family M member 1 of Mus musculus (Mouse).